The sequence spans 155 residues: Protein Smg homolog (155 aa).

Belongs to the Smg family.

This is Protein Smg homolog from Azoarcus sp. (strain BH72).